Here is a 129-residue protein sequence, read N- to C-terminus: Biogenesis of lysosome-related organelles complex 1 subunit CNL1 (129 aa).

Belongs to the BLOC1S4 family. Component of the biogenesis of lysosome-related organelles complex-1 (BLOC-1).

Its subcellular location is the cytoplasm. Its function is as follows. Component of the biogenesis of lysosome-related organelles complex-1 (BLOC-1), a complex that is involved in endosomal cargo sorting. The sequence is that of Biogenesis of lysosome-related organelles complex 1 subunit CNL1 (CLN1) from Eremothecium gossypii (strain ATCC 10895 / CBS 109.51 / FGSC 9923 / NRRL Y-1056) (Yeast).